Consider the following 260-residue polypeptide: Uridylate kinase (260 aa).

Residue 29 to 32 (KLSG) coordinates ATP. The tract at residues 37–42 (GDLGYG) is involved in allosteric activation by GTP. Residue Gly71 coordinates UMP. Gly72 and Arg76 together coordinate ATP. UMP contacts are provided by residues Asp91 and 152 to 159 (SGNPFFTT). Residues Thr179, Tyr185, and Asp188 each coordinate ATP.

The protein belongs to the UMP kinase family. In terms of assembly, homohexamer.

It is found in the cytoplasm. The enzyme catalyses UMP + ATP = UDP + ADP. Its pathway is pyrimidine metabolism; CTP biosynthesis via de novo pathway; UDP from UMP (UMPK route): step 1/1. Its activity is regulated as follows. Allosterically activated by GTP. Inhibited by UTP. Functionally, catalyzes the reversible phosphorylation of UMP to UDP. The polypeptide is Uridylate kinase (Synechocystis sp. (strain ATCC 27184 / PCC 6803 / Kazusa)).